We begin with the raw amino-acid sequence, 327 residues long: Ribosomal RNA small subunit methyltransferase H (327 aa).

Residues 36 to 38 (GGH), Asp61, Phe88, Asp114, and Gln121 each bind S-adenosyl-L-methionine.

It belongs to the methyltransferase superfamily. RsmH family.

The protein localises to the cytoplasm. It catalyses the reaction cytidine(1402) in 16S rRNA + S-adenosyl-L-methionine = N(4)-methylcytidine(1402) in 16S rRNA + S-adenosyl-L-homocysteine + H(+). In terms of biological role, specifically methylates the N4 position of cytidine in position 1402 (C1402) of 16S rRNA. The chain is Ribosomal RNA small subunit methyltransferase H from Chlorobium luteolum (strain DSM 273 / BCRC 81028 / 2530) (Pelodictyon luteolum).